The following is a 345-amino-acid chain: MLSLRRGLITKSYLNYKFVNHLAVIPRNYSNDSKYFFSKPPANDNNDKGSYADSKHFFTKPNGKMNSNEQIDQMHNNGSNNPNNNKNGSTDSLIGQAILQQRRERRKQVWYALGISIFAVLIGYSIGYKVIYLNEDSFIPLYPSSGIRKPSQNDLRKIDVPHIKLISHLRVLEVLSHHDMIKEQYGVPLHDSNGVNPPQIKEFNIWCEDQDPCVTGLIIRKDDPNRPTTHTWHRIPYLLQWRVTHRPICISRSISNFLEDIGLSYSTIYEIISPEKIYGSFKYEYPIPGDDHSMHIWFLGELQLNNDTLIIYKGKYHVDVKLQQVDLLRNEDGKLVRYVLFKENE.

The transit peptide at 1–29 (MLSLRRGLITKSYLNYKFVNHLAVIPRNY) directs the protein to the mitochondrion. A disordered region spans residues 46-91 (NDKGSYADSKHFFTKPNGKMNSNEQIDQMHNNGSNNPNNNKNGSTD). Polar residues predominate over residues 64–75 (KMNSNEQIDQMH). Residues 76–89 (NNGSNNPNNNKNGS) show a composition bias toward low complexity. A helical transmembrane segment spans residues 113–133 (LGISIFAVLIGYSIGYKVIYL).

Belongs to the AIM39 family.

The protein localises to the mitochondrion membrane. This is Altered inheritance of mitochondria protein 39, mitochondrial (AIM39) from Vanderwaltozyma polyspora (strain ATCC 22028 / DSM 70294 / BCRC 21397 / CBS 2163 / NBRC 10782 / NRRL Y-8283 / UCD 57-17) (Kluyveromyces polysporus).